Consider the following 336-residue polypeptide: tRNA-cytidine(32) 2-sulfurtransferase (336 aa).

The disordered stretch occupies residues Met1–Glu42. The short motif at Ser75–Ser80 is the PP-loop motif element. [4Fe-4S] cluster-binding residues include Cys150, Cys153, and Cys241. Residues Pro301–Val328 form a disordered region. The span at Asp315–Val328 shows a compositional bias: polar residues.

Belongs to the TtcA family. In terms of assembly, homodimer. It depends on Mg(2+) as a cofactor. [4Fe-4S] cluster serves as cofactor.

The protein resides in the cytoplasm. The enzyme catalyses cytidine(32) in tRNA + S-sulfanyl-L-cysteinyl-[cysteine desulfurase] + AH2 + ATP = 2-thiocytidine(32) in tRNA + L-cysteinyl-[cysteine desulfurase] + A + AMP + diphosphate + H(+). Its pathway is tRNA modification. Functionally, catalyzes the ATP-dependent 2-thiolation of cytidine in position 32 of tRNA, to form 2-thiocytidine (s(2)C32). The sulfur atoms are provided by the cysteine/cysteine desulfurase (IscS) system. This is tRNA-cytidine(32) 2-sulfurtransferase from Paraburkholderia phymatum (strain DSM 17167 / CIP 108236 / LMG 21445 / STM815) (Burkholderia phymatum).